The sequence spans 152 residues: Putative toxin MJ1304 (152 aa).

The 121-residue stretch at 15 to 135 (IKRAEEDLEV…EECLKDAENV (121 aa)) folds into the HEPN domain.

Functionally, putative toxin component of a putative type VII toxin-antitoxin (TA) system. Its cognate antitoxin might be MJ1305. This is Putative toxin MJ1304 from Methanocaldococcus jannaschii (strain ATCC 43067 / DSM 2661 / JAL-1 / JCM 10045 / NBRC 100440) (Methanococcus jannaschii).